The primary structure comprises 96 residues: Small ribosomal subunit protein bS6 (96 aa).

Belongs to the bacterial ribosomal protein bS6 family.

Functionally, binds together with bS18 to 16S ribosomal RNA. The polypeptide is Small ribosomal subunit protein bS6 (Mycolicibacterium paratuberculosis (strain ATCC BAA-968 / K-10) (Mycobacterium paratuberculosis)).